The primary structure comprises 1390 residues: Hepatocyte growth factor receptor (1390 aa).

The signal sequence occupies residues 1-24 (MKAPAVLAPGILVLLFTLVQRSNG). The Extracellular segment spans residues 25–932 (ECKEALAKSE…VIVQPDQNFT (908 aa)). Residues 27 to 515 (KEALAKSEMN…TGKKITKIPL (489 aa)) form the Sema domain. Asn-45 carries an N-linked (GlcNAc...) asparagine glycan. Cystine bridges form between Cys-95–Cys-101, Cys-98–Cys-160, Cys-133–Cys-141, and Cys-172–Cys-175. Asn-106 carries N-linked (GlcNAc...) asparagine glycosylation. Asn-149 carries N-linked (GlcNAc...) asparagine glycosylation. Asn-202 is a glycosylation site (N-linked (GlcNAc...) asparagine). 2 disulfides stabilise this stretch: Cys-298/Cys-363 and Cys-385/Cys-397. N-linked (GlcNAc...) asparagine glycans are attached at residues Asn-399 and Asn-405. Intrachain disulfides connect Cys-520–Cys-538, Cys-526–Cys-561, Cys-529–Cys-545, and Cys-541–Cys-551. 3 IPT/TIG domains span residues 563-655 (PAIY…FSYV), 657-739 (PVIT…FSYR), and 742-836 (PIVY…LIYV). Residue Thr-582 is glycosylated (O-linked (Man) threonine). The N-linked (GlcNAc...) asparagine glycan is linked to Asn-607. Cys-610 and Cys-624 are oxidised to a cystine. A glycan (N-linked (GlcNAc...) asparagine) is linked at Asn-635. Thr-676 is a glycosylation site (O-linked (Man) threonine). The cysteines at positions 697 and 709 are disulfide-linked. O-linked (Man) threonine glycosylation is present at Thr-761. N-linked (GlcNAc...) asparagine glycans are attached at residues Asn-785, Asn-879, and Asn-930. Residues 933-955 (GLIAGVVSISTALLLLLGFFLWL) traverse the membrane as a helical segment. Over 956-1390 (KKRKQIKDLG…TRPASFWETS (435 aa)) the chain is Cytoplasmic. Ser-966 is modified (phosphoserine). A Phosphothreonine modification is found at Thr-977. Phosphoserine occurs at positions 990, 997, and 1000. Position 1003 is a phosphotyrosine (Tyr-1003). The 268-residue stretch at 1078 to 1345 (VHFNEVIGRG…RISAIFSTFI (268 aa)) folds into the Protein kinase domain. ATP is bound by residues 1084–1092 (IGRGHFGCV) and Lys-1110. Asp-1204 serves as the catalytic Proton acceptor. Positions 1212 to 1390 (LDEKFTVKVA…TRPASFWETS (179 aa)) are interaction with RANBP9. Position 1230 is a phosphotyrosine (Tyr-1230). Residues Tyr-1234 and Tyr-1235 each carry the phosphotyrosine; by autocatalysis modification. Thr-1289 carries the phosphothreonine modification. Residues 1320–1359 (WHPKAEMRPSFSELVSRISAIFSTFIGEHYVHVNATYVNV) form an interaction with MUC20 region. Residues Tyr-1349 and Tyr-1356 each carry the phosphotyrosine; by autocatalysis modification. Position 1365 is a phosphotyrosine (Tyr-1365).

The protein belongs to the protein kinase superfamily. Tyr protein kinase family. In terms of assembly, heterodimer made of an alpha chain (50 kDa) and a beta chain (145 kDa) which are disulfide linked. Binds PLXNB1. Interacts when phosphorylated with downstream effectors including STAT3, PIK3R1, SRC, PCLG1, GRB2 and GAB1. Interacts with SPSB1, SPSB2 and SPSB4. Interacts with INPP5D/SHIP1. When phosphorylated at Tyr-1356, interacts with INPPL1/SHIP2. Interacts with RANBP9 and RANBP10, as well as SPSB1, SPSB2, SPSB3 and SPSB4. SPSB1 binding occurs in the presence and in the absence of HGF, however HGF treatment has a positive effect on this interaction. Interacts with MUC20; prevents interaction with GRB2 and suppresses hepatocyte growth factor-induced cell proliferation. Interacts with GRB10. Interacts with PTPN1 and PTPN2. Interacts with LECT2; this interaction may have an antagonistic effect on receptor activation. Interacts with HSP90AA1 and HSP90AB1; the interaction suppresses MET kinase activity. Interacts with tensin TNS3. Interacts (when phosphorylated) with tensin TNS4 (via SH2 domain); the interaction increases MET protein stability by inhibiting MET endocytosis and subsequent lysosomal degradation. As to quaternary structure, (Microbial infection) Interacts via extracytoplasmic residues 25-656 with L.monocytogenes InlB; MET can bind HGF, its endogenous ligand, and InlB simultaneously. InlB probably dimerizes upon binding to MET, which encourages subsequent dimerization of MET. Post-translationally, autophosphorylated in response to ligand binding on Tyr-1234 and Tyr-1235 in the kinase domain leading to further phosphorylation of Tyr-1349 and Tyr-1356 in the C-terminal multifunctional docking site. Dephosphorylated by PTPRJ at Tyr-1349 and Tyr-1365. Dephosphorylated by PTPN1 and PTPN2. In terms of processing, ubiquitinated. Ubiquitination by CBL regulates MET endocytosis, resulting in decreasing plasma membrane receptor abundance, and in endosomal degradation and/or recycling of internalized receptors. O-mannosylation of IPT/TIG domains by TMEM260 is required for protein maturation. O-mannosylated residues are composed of single mannose glycans that are not elongated or modified. Post-translationally, (Microbial infection) Tyrosine phosphorylation is stimulated by L.monocytogenes InlB. Tyrosine phosphorylation is maximal 10-20 minutes after treatment with InlB and disappears by 60 minutes. The phosphorylated residues were not identified. In terms of tissue distribution, expressed in normal hepatocytes as well as in epithelial cells lining the stomach, the small and the large intestine. Found also in basal keratinocytes of esophagus and skin. High levels are found in liver, gastrointestinal tract, thyroid and kidney. Also present in the brain. Expressed in metaphyseal bone (at protein level).

Its subcellular location is the membrane. The protein resides in the secreted. It carries out the reaction L-tyrosyl-[protein] + ATP = O-phospho-L-tyrosyl-[protein] + ADP + H(+). Its activity is regulated as follows. In its inactive state, the C-terminal tail interacts with the catalytic domain and inhibits the kinase activity. Upon ligand binding, the C-terminal tail is displaced and becomes phosphorylated, thus increasing the kinase activity. Its function is as follows. Receptor tyrosine kinase that transduces signals from the extracellular matrix into the cytoplasm by binding to hepatocyte growth factor/HGF ligand. Regulates many physiological processes including proliferation, scattering, morphogenesis and survival. Ligand binding at the cell surface induces autophosphorylation of MET on its intracellular domain that provides docking sites for downstream signaling molecules. Following activation by ligand, interacts with the PI3-kinase subunit PIK3R1, PLCG1, SRC, GRB2, STAT3 or the adapter GAB1. Recruitment of these downstream effectors by MET leads to the activation of several signaling cascades including the RAS-ERK, PI3 kinase-AKT, or PLCgamma-PKC. The RAS-ERK activation is associated with the morphogenetic effects while PI3K/AKT coordinates prosurvival effects. During embryonic development, MET signaling plays a role in gastrulation, development and migration of neuronal precursors, angiogenesis and kidney formation. During skeletal muscle development, it is crucial for the migration of muscle progenitor cells and for the proliferation of secondary myoblasts. In adults, participates in wound healing as well as organ regeneration and tissue remodeling. Also promotes differentiation and proliferation of hematopoietic cells. May regulate cortical bone osteogenesis. In terms of biological role, (Microbial infection) Acts as a receptor for Listeria monocytogenes internalin InlB, mediating entry of the pathogen into cells. The sequence is that of Hepatocyte growth factor receptor (MET) from Homo sapiens (Human).